The sequence spans 105 residues: Large ribosomal subunit protein uL24 (105 aa).

Belongs to the universal ribosomal protein uL24 family. Part of the 50S ribosomal subunit.

Functionally, one of two assembly initiator proteins, it binds directly to the 5'-end of the 23S rRNA, where it nucleates assembly of the 50S subunit. Its function is as follows. One of the proteins that surrounds the polypeptide exit tunnel on the outside of the subunit. This is Large ribosomal subunit protein uL24 from Vibrio vulnificus (strain YJ016).